The following is a 309-amino-acid chain: Testis-expressed protein 264 homolog (309 aa).

Residues 1-3 lie on the Lumenal side of the membrane; sequence MPD. The helical; Signal-anchor for type III membrane protein transmembrane segment at 4-24 threads the bilayer; the sequence is LLLLGLIGALTLLLLLTLLAF. Over 25–309 the chain is Cytoplasmic; the sequence is AGYSGLLTGV…ELSTPERGEE (285 aa). The segment at 193 to 309 is disordered; sequence PEVKETERKC…ELSTPERGEE (117 aa). Residues 208–225 are compositionally biased toward low complexity; sequence ATDTQTDGTGADTSDASS. A phosphoserine mark is found at Ser-238 and Ser-243. The span at 250–262 shows a compositional bias: basic and acidic residues; sequence GWDDGDNRSEHSY. Positions 263-272 are enriched in low complexity; that stretch reads SESGASGSSF. An LIR motif motif is present at residues 272 to 275; the sequence is FEEL.

In terms of assembly, interacts (via the LIR motif) with ATG8 family proteins MAP1LC3A, MAP1LC3B, GABARAP and GABARAPL1. Interacts with VCP/p97; bridging VCP/p97 to covalent DNA-protein cross-links (DPCs). Interacts with TOP1 (when sumoylated).

It localises to the endoplasmic reticulum membrane. It is found in the cytoplasmic vesicle. The protein resides in the autophagosome. The protein localises to the cytoplasm. Its subcellular location is the cytosol. It localises to the nucleus. It is found in the chromosome. In terms of biological role, major reticulophagy (also called ER-phagy) receptor that acts independently of other candidate reticulophagy receptors to remodel subdomains of the endoplasmic reticulum into autophagosomes upon nutrient stress, which then fuse with lysosomes for endoplasmic reticulum turnover. The ATG8-containing isolation membrane (IM) cradles a tubular segment of TEX264-positive ER near a three-way junction, allowing the formation of a synapse of 2 juxtaposed membranes with trans interaction between the TEX264 and ATG8 proteins. Expansion of the IM would extend the capture of ER, possibly through a 'zipper-like' process involving continued trans TEX264-ATG8 interactions, until poorly understood mechanisms lead to the fission of relevant membranes and, ultimately, autophagosomal membrane closure. Also involved in the repair of covalent DNA-protein cross-links (DPCs) during DNA synthesis: acts by bridging VCP/p97 to covalent DNA-protein cross-links (DPCs) and initiating resolution of DPCs by SPRTN. The polypeptide is Testis-expressed protein 264 homolog (Mus musculus (Mouse)).